Consider the following 312-residue polypeptide: Pantothenate kinase (312 aa).

97–104 is a binding site for ATP; it reads GSVAVGKS.

It belongs to the prokaryotic pantothenate kinase family.

The protein resides in the cytoplasm. It catalyses the reaction (R)-pantothenate + ATP = (R)-4'-phosphopantothenate + ADP + H(+). Its pathway is cofactor biosynthesis; coenzyme A biosynthesis; CoA from (R)-pantothenate: step 1/5. In Mycolicibacterium smegmatis (strain ATCC 700084 / mc(2)155) (Mycobacterium smegmatis), this protein is Pantothenate kinase.